The chain runs to 504 residues: DnaJ homolog subfamily C member 3 (504 aa).

The first 31 residues, 1–31 (MVAPGSVRSRLGAVFPFLLVLVDLQYEGAEC), serve as a signal peptide directing secretion. TPR repeat units lie at residues 37–70 (VEKH…DPDN), 72–104 (IAYY…KMDF), 105–138 (TAAR…NPSE), 154–187 (MQRL…CVWD), 188–221 (AELR…KNDN), 222–255 (TEAF…DQDH), 268–301 (LNKL…EPSV), 306–339 (VRSK…EPDN), and 340–373 (VNAL…NEND). A disulfide bridge connects residues C248 and C258. Position 274 is a phosphoserine (S274). C313 and C329 form a disulfide bridge. A flexible linker region spans residues 375-393 (QIREGLEKAQRLLKQSQKR). Residues 394–462 (DYYKILGVKR…EMRRKFDDGE (69 aa)) form the J domain. The interval 451–481 (DPEMRRKFDDGEDPLDAETQQGGGSNPFHRS) is disordered. S475 carries the post-translational modification Phosphoserine.

In terms of assembly, interacts with EIF2AK2 and EIF2AK3. Forms a trimeric complex with DNAJB1 and HSPA8. Interacts with THAP12.

The protein resides in the endoplasmic reticulum. In terms of biological role, involved in the unfolded protein response (UPR) during ER stress. Co-chaperone of HSPA8/HSC70, it stimulates its ATPase activity. May inhibit both the autophosphorylation of EIF2AK2/PKR and the ability of EIF2AK2 to catalyze phosphorylation of the EIF2A. May inhibit EIF2AK3/PERK activity. This Rattus norvegicus (Rat) protein is DnaJ homolog subfamily C member 3 (Dnajc3).